A 136-amino-acid polypeptide reads, in one-letter code: Fluoride-specific ion channel FluC (136 aa).

A run of 4 helical transmembrane segments spans residues 3–23 (TLPP…GAVL), 46–66 (ATLA…GVLF), 78–98 (LLIG…SLEV), and 109–129 (FAAL…VFGL). Na(+) contacts are provided by Gly86 and Thr89.

Belongs to the fluoride channel Fluc/FEX (TC 1.A.43) family.

It is found in the cell inner membrane. The catalysed reaction is fluoride(in) = fluoride(out). Na(+) is not transported, but it plays an essential structural role and its presence is essential for fluoride channel function. In terms of biological role, fluoride-specific ion channel. Important for reducing fluoride concentration in the cell, thus reducing its toxicity. This is Fluoride-specific ion channel FluC from Erythrobacter litoralis (strain HTCC2594).